A 105-amino-acid chain; its full sequence is MKVAGVFLLLSLALLCFFSGAFSQGGQDKRGWITRSEGRFPGKGVLRHRLFQINCGEFRDPKVFCTRESDPLCGSDGQTYGNKCAFCKALEKSSGKINLKHRGKC.

The first 23 residues, 1–23 (MKVAGVFLLLSLALLCFFSGAFS), serve as a signal peptide directing secretion. Glutamine 24 bears the Pyrrolidone carboxylic acid mark. A Kazal-like domain is found at 49-105 (RLFQINCGEFRDPKVFCTRESDPLCGSDGQTYGNKCAFCKALEKSSGKINLKHRGKC). Intrachain disulfides connect cysteine 55–cysteine 87, cysteine 65–cysteine 84, and cysteine 73–cysteine 105.

Expressed in the upper epidermis and in skin appendages.

The protein localises to the secreted. Serine protease inhibitor selective for kallikreins. Efficiently inhibits KLK5 and human KLK2, KLK4, KLK5, KLK6, KLK7, KLK12, KLK13 and KLK14. Doesn't inhibit human KLK1 and KLK8. This is Serine protease inhibitor Kazal-type 6 (Spink6) from Mus musculus (Mouse).